The following is a 402-amino-acid chain: MGDFQKVVLAYSGGVDTSACIPYLKNEYGVEEIIAFAADLGQGEELEVVRKKALLAGAKESLVDDLIEPFIHDFAFPAIRANALYEGRYPLSTALARPLIASRLVELAREMEAGAVAHGCTGKGNDQVRFDLAISSLAPHLKILTPAREWSMSRQELISYGEKFGIPAPVSKKSPYSIDLNLLGRSIEAGPLEDPFLAPREEVFQITSSIQESPDTPEEIEIQFEAGNPIAINGVTLDPVSIIKKANALAGRHGFGRIDMIENRVVGIKSREIYEAPGLMLLIKCHQEIESITLSADVLRTKVGIERQWADLVYQGFWFSPLKNALDAFIDRTQLDVNGSVKIQLFKGNATIQGRQSYSNSLYLPDIATYSAEDQYDHKSAEGFIYVWGLANRLWASINRDK.

Residues 10–18 (AYSGGVDTS) and Ala-38 each bind ATP. Tyr-89 serves as a coordination point for L-citrulline. Residue Gly-119 participates in ATP binding. L-aspartate contacts are provided by Thr-121, Asn-125, and Asp-126. Position 125 (Asn-125) interacts with L-citrulline. Arg-129, Ser-177, Ser-186, Glu-262, and Tyr-274 together coordinate L-citrulline.

The protein belongs to the argininosuccinate synthase family. Type 1 subfamily. In terms of assembly, homotetramer.

It is found in the cytoplasm. It catalyses the reaction L-citrulline + L-aspartate + ATP = 2-(N(omega)-L-arginino)succinate + AMP + diphosphate + H(+). It functions in the pathway amino-acid biosynthesis; L-arginine biosynthesis; L-arginine from L-ornithine and carbamoyl phosphate: step 2/3. This chain is Argininosuccinate synthase, found in Prochlorococcus marinus (strain SARG / CCMP1375 / SS120).